The sequence spans 84 residues: MERNLRKKRLGRVVSDKMDKTIVVAVETKVRHPLYGKTVNRTTKFKAHDENNEARFGDRVLIMETRPLSKDKRWRLVEIVEKAK.

This sequence belongs to the universal ribosomal protein uS17 family. In terms of assembly, part of the 30S ribosomal subunit.

Functionally, one of the primary rRNA binding proteins, it binds specifically to the 5'-end of 16S ribosomal RNA. This Clostridium perfringens (strain ATCC 13124 / DSM 756 / JCM 1290 / NCIMB 6125 / NCTC 8237 / Type A) protein is Small ribosomal subunit protein uS17.